The primary structure comprises 697 residues: Elongation factor G (697 aa).

The 280-residue stretch at 8 to 287 (ERVRNIGIAA…AVVDYLPAPT (280 aa)) folds into the tr-type G domain. GTP contacts are provided by residues 17–24 (AHIDAGKT), 81–85 (DTPGH), and 135–138 (NKMD).

This sequence belongs to the TRAFAC class translation factor GTPase superfamily. Classic translation factor GTPase family. EF-G/EF-2 subfamily.

The protein resides in the cytoplasm. In terms of biological role, catalyzes the GTP-dependent ribosomal translocation step during translation elongation. During this step, the ribosome changes from the pre-translocational (PRE) to the post-translocational (POST) state as the newly formed A-site-bound peptidyl-tRNA and P-site-bound deacylated tRNA move to the P and E sites, respectively. Catalyzes the coordinated movement of the two tRNA molecules, the mRNA and conformational changes in the ribosome. The protein is Elongation factor G (fusA) of Arthrospira platensis (Spirulina platensis).